We begin with the raw amino-acid sequence, 93 residues long: MADITDIKSIMYTEKSLQIQESGVLVVQTSPKVSKNQLKEVFKEYFGFTPVRVNSLRQAGKIKRFRGVEGKRASFKKFYVKLPEGAKIESLAV.

It belongs to the universal ribosomal protein uL23 family. Part of the 50S ribosomal subunit. Contacts protein L29, and trigger factor when it is bound to the ribosome.

One of the early assembly proteins it binds 23S rRNA. One of the proteins that surrounds the polypeptide exit tunnel on the outside of the ribosome. Forms the main docking site for trigger factor binding to the ribosome. In Wolinella succinogenes (strain ATCC 29543 / DSM 1740 / CCUG 13145 / JCM 31913 / LMG 7466 / NCTC 11488 / FDC 602W) (Vibrio succinogenes), this protein is Large ribosomal subunit protein uL23.